The sequence spans 473 residues: Glutamate--tRNA ligase (473 aa).

The 'HIGH' region motif lies at 9 to 19 (PSPTGELHLGS). Positions 237 to 241 (KLSKK) match the 'KMSKS' region motif. Residue Lys240 participates in ATP binding.

This sequence belongs to the class-I aminoacyl-tRNA synthetase family. Glutamate--tRNA ligase type 1 subfamily. Monomer.

The protein localises to the cytoplasm. It carries out the reaction tRNA(Glu) + L-glutamate + ATP = L-glutamyl-tRNA(Glu) + AMP + diphosphate. Catalyzes the attachment of glutamate to tRNA(Glu) in a two-step reaction: glutamate is first activated by ATP to form Glu-AMP and then transferred to the acceptor end of tRNA(Glu). The chain is Glutamate--tRNA ligase from Wigglesworthia glossinidia brevipalpis.